A 209-amino-acid chain; its full sequence is NADH-ubiquinone oxidoreductase subunit 9 (209 aa).

Belongs to the complex I 30 kDa subunit family. Complex I is composed of about 45 different subunits.

The protein localises to the mitochondrion inner membrane. It catalyses the reaction a ubiquinone + NADH + 5 H(+)(in) = a ubiquinol + NAD(+) + 4 H(+)(out). Functionally, core subunit of the mitochondrial membrane respiratory chain NADH dehydrogenase (Complex I) that is believed to belong to the minimal assembly required for catalysis. Complex I functions in the transfer of electrons from NADH to the respiratory chain. The immediate electron acceptor for the enzyme is believed to be ubiquinone. The sequence is that of NADH-ubiquinone oxidoreductase subunit 9 (nad9) from Dictyostelium discoideum (Social amoeba).